We begin with the raw amino-acid sequence, 309 residues long: Ribose-phosphate pyrophosphokinase (309 aa).

Residues 37 to 39 (DGE) and 96 to 97 (RQ) each bind ATP. The Mg(2+) site is built by His-130 and Asp-169. Residue Lys-192 is part of the active site. Residues Arg-194, Asp-218, and 222–226 (DTAGT) each bind D-ribose 5-phosphate.

Belongs to the ribose-phosphate pyrophosphokinase family. Class I subfamily. Homohexamer. The cofactor is Mg(2+).

The protein localises to the cytoplasm. It carries out the reaction D-ribose 5-phosphate + ATP = 5-phospho-alpha-D-ribose 1-diphosphate + AMP + H(+). The protein operates within metabolic intermediate biosynthesis; 5-phospho-alpha-D-ribose 1-diphosphate biosynthesis; 5-phospho-alpha-D-ribose 1-diphosphate from D-ribose 5-phosphate (route I): step 1/1. Its function is as follows. Involved in the biosynthesis of the central metabolite phospho-alpha-D-ribosyl-1-pyrophosphate (PRPP) via the transfer of pyrophosphoryl group from ATP to 1-hydroxyl of ribose-5-phosphate (Rib-5-P). This is Ribose-phosphate pyrophosphokinase from Helicobacter hepaticus (strain ATCC 51449 / 3B1).